Reading from the N-terminus, the 580-residue chain is DNA mismatch repair protein MutL (580 aa).

Belongs to the DNA mismatch repair MutL/HexB family.

In terms of biological role, this protein is involved in the repair of mismatches in DNA. It is required for dam-dependent methyl-directed DNA mismatch repair. May act as a 'molecular matchmaker', a protein that promotes the formation of a stable complex between two or more DNA-binding proteins in an ATP-dependent manner without itself being part of a final effector complex. The protein is DNA mismatch repair protein MutL of Chlamydia felis (strain Fe/C-56) (Chlamydophila felis).